The following is a 476-amino-acid chain: Acidic leucine-rich nuclear phosphoprotein 32-related protein 1 (476 aa).

LRR repeat units lie at residues 51 to 72, 73 to 92, and 98 to 119; these read SLEH…PRLR, NLTR…DHLV, and SLRD…SPLA. Positions 131–169 constitute an LRRCT domain; it reads CPVTRVKDYRSKVFGMIRTLKYLDKMDADENERPESDDD. The interval 157 to 476 is disordered; the sequence is DADENERPES…VEDLRPFKHH (320 aa). Acidic residues-rich tracts occupy residues 165 to 194, 222 to 232, 252 to 289, 299 to 329, 353 to 371, 379 to 396, 415 to 436, and 458 to 467; these read ESDD…EDPG, DVDEDESDADE, GDED…EDAV, SDEE…EAEP, EGED…EERL, EGND…EDTE, DAAE…DDGG, and GDDDEDDDGV.

It belongs to the ANP32 family.

This is Acidic leucine-rich nuclear phosphoprotein 32-related protein 1 from Oryza sativa subsp. japonica (Rice).